We begin with the raw amino-acid sequence, 436 residues long: Citrate synthase (436 aa).

Residues His313 and Asp371 contribute to the active site.

It belongs to the citrate synthase family. In terms of assembly, homohexamer.

It carries out the reaction oxaloacetate + acetyl-CoA + H2O = citrate + CoA + H(+). Its pathway is carbohydrate metabolism; tricarboxylic acid cycle; isocitrate from oxaloacetate: step 1/2. The chain is Citrate synthase (aarA) from Acetobacter aceti.